The sequence spans 389 residues: Chalcone synthase 1 (389 aa).

The active site involves Cys164.

This sequence belongs to the thiolase-like superfamily. Chalcone/stilbene synthases family.

The catalysed reaction is (E)-4-coumaroyl-CoA + 3 malonyl-CoA + 3 H(+) = 2',4,4',6'-tetrahydroxychalcone + 3 CO2 + 4 CoA. It functions in the pathway secondary metabolite biosynthesis; flavonoid biosynthesis. In terms of biological role, the primary product of this enzyme is 4,2',4',6'-tetrahydroxychalcone (also termed naringenin-chalcone or chalcone) which can under specific conditions spontaneously isomerize into naringenin. This is Chalcone synthase 1 (CHS1) from Trifolium subterraneum (Subterranean clover).